Reading from the N-terminus, the 606-residue chain is Aspartate--tRNA(Asp/Asn) ligase (606 aa).

E177 is a binding site for L-aspartate. Positions 201–204 are aspartate; it reads QIFK. Residue R223 participates in L-aspartate binding. ATP contacts are provided by residues 223-225 and Q232; that span reads RDE. H461 lines the L-aspartate pocket. E499 contacts ATP. R506 provides a ligand contact to L-aspartate. 551–554 contacts ATP; the sequence is GLDR.

It belongs to the class-II aminoacyl-tRNA synthetase family. Type 1 subfamily. Homodimer.

Its subcellular location is the cytoplasm. The catalysed reaction is tRNA(Asx) + L-aspartate + ATP = L-aspartyl-tRNA(Asx) + AMP + diphosphate. In terms of biological role, aspartyl-tRNA synthetase with relaxed tRNA specificity since it is able to aspartylate not only its cognate tRNA(Asp) but also tRNA(Asn). Reaction proceeds in two steps: L-aspartate is first activated by ATP to form Asp-AMP and then transferred to the acceptor end of tRNA(Asp/Asn). The sequence is that of Aspartate--tRNA(Asp/Asn) ligase from Prochlorococcus marinus (strain MIT 9211).